The following is a 483-amino-acid chain: MSKNNEEFVKEITPQSEDYSQWYLDVIKKTKLVDYAPVKGCMVIRPYGYAIWEKMKEGLDRRIKETGHENAYFPLFIPESLLQKEADHVEGFAPEVAWITKGGDEELSESLAVRPTSEAMFGEMYSDWIQSWRDLPVLINQWANVVRWEKSTKPFLRTSEFLWQEGHTAHRTEEDAEEEALQMLDVYKDFVENDMAIPVLNGLKSEKEKFAGALRTFCIEALMSDGRALQAGTSHNLGQHFAKVFDITFLDQDDERKYVWQTSWGVSTRLIGALIMVHGDNRGLKIPPKVAPHQLVMVPITPKKQREQVLEESDKLYQELKDKFRVKLDNREEHTPGWKFNEWEMKGVPIRLEIGPKDIEKDQVVLVRRDTDEKMFVKRDELIDKLEELIEDIQNKMLQTAKNFLEENTHTASSLDELGQILEQKRGMIKAYWCGNQACEEKVKDDTKATIRVIPFEAETGGSCIACGYHNDDNKEVFFARAY.

It belongs to the class-II aminoacyl-tRNA synthetase family. ProS type 3 subfamily. In terms of assembly, homodimer.

It localises to the cytoplasm. The catalysed reaction is tRNA(Pro) + L-proline + ATP = L-prolyl-tRNA(Pro) + AMP + diphosphate. Functionally, catalyzes the attachment of proline to tRNA(Pro) in a two-step reaction: proline is first activated by ATP to form Pro-AMP and then transferred to the acceptor end of tRNA(Pro). The polypeptide is Proline--tRNA ligase (Natranaerobius thermophilus (strain ATCC BAA-1301 / DSM 18059 / JW/NM-WN-LF)).